The following is a 285-amino-acid chain: Diaminopimelate epimerase (285 aa).

Asparagine 11 and asparagine 62 together coordinate substrate. Cysteine 71 (proton donor) is an active-site residue. Substrate contacts are provided by residues 72-73 (GN), asparagine 167, asparagine 200, and 218-219 (ER). Cysteine 227 functions as the Proton acceptor in the catalytic mechanism. 228–229 (GT) is a binding site for substrate.

It belongs to the diaminopimelate epimerase family. Homodimer.

The protein localises to the cytoplasm. It carries out the reaction (2S,6S)-2,6-diaminopimelate = meso-2,6-diaminopimelate. It functions in the pathway amino-acid biosynthesis; L-lysine biosynthesis via DAP pathway; DL-2,6-diaminopimelate from LL-2,6-diaminopimelate: step 1/1. Its function is as follows. Catalyzes the stereoinversion of LL-2,6-diaminopimelate (L,L-DAP) to meso-diaminopimelate (meso-DAP), a precursor of L-lysine and an essential component of the bacterial peptidoglycan. The chain is Diaminopimelate epimerase from Agathobacter rectalis (strain ATCC 33656 / DSM 3377 / JCM 17463 / KCTC 5835 / VPI 0990) (Eubacterium rectale).